A 239-amino-acid chain; its full sequence is 4-hydroxy-tetrahydrodipicolinate reductase (239 aa).

NAD(+)-binding positions include aspartate 32, 73 to 75 (GTT), and 98 to 101 (ASNF). The Proton donor/acceptor role is filled by histidine 133. Position 134 (histidine 134) interacts with (S)-2,3,4,5-tetrahydrodipicolinate. The active-site Proton donor is the lysine 137. (S)-2,3,4,5-tetrahydrodipicolinate is bound at residue 143 to 144 (GT).

This sequence belongs to the DapB family.

It localises to the cytoplasm. It carries out the reaction (S)-2,3,4,5-tetrahydrodipicolinate + NAD(+) + H2O = (2S,4S)-4-hydroxy-2,3,4,5-tetrahydrodipicolinate + NADH + H(+). The enzyme catalyses (S)-2,3,4,5-tetrahydrodipicolinate + NADP(+) + H2O = (2S,4S)-4-hydroxy-2,3,4,5-tetrahydrodipicolinate + NADPH + H(+). It functions in the pathway amino-acid biosynthesis; L-lysine biosynthesis via DAP pathway; (S)-tetrahydrodipicolinate from L-aspartate: step 4/4. Functionally, catalyzes the conversion of 4-hydroxy-tetrahydrodipicolinate (HTPA) to tetrahydrodipicolinate. The polypeptide is 4-hydroxy-tetrahydrodipicolinate reductase (Christiangramia forsetii (strain DSM 17595 / CGMCC 1.15422 / KT0803) (Gramella forsetii)).